Consider the following 369-residue polypeptide: Glycerol-3-phosphate dehydrogenase [NAD(P)+] (369 aa).

Residues serine 6, tryptophan 7, arginine 27, arginine 28, and lysine 101 each contribute to the NADPH site. Residues lysine 101 and glycine 131 each contribute to the sn-glycerol 3-phosphate site. Alanine 135 serves as a coordination point for NADPH. Lysine 186, aspartate 239, serine 249, arginine 250, and asparagine 251 together coordinate sn-glycerol 3-phosphate. Catalysis depends on lysine 186, which acts as the Proton acceptor. Arginine 250 is an NADPH binding site. Glutamate 276 contacts NADPH. The tract at residues 312–369 (KDIAPHLTTDDEPQGERTRGERTTDDGQGQGRTSVWGSLKRAFDQLRDGGGSSRRDRP) is disordered. 2 stretches are compositionally biased toward basic and acidic residues: residues 325 to 336 (QGERTRGERTTD) and 352 to 369 (RAFD…RDRP).

The protein belongs to the NAD-dependent glycerol-3-phosphate dehydrogenase family.

Its subcellular location is the cytoplasm. The enzyme catalyses sn-glycerol 3-phosphate + NAD(+) = dihydroxyacetone phosphate + NADH + H(+). It catalyses the reaction sn-glycerol 3-phosphate + NADP(+) = dihydroxyacetone phosphate + NADPH + H(+). It participates in membrane lipid metabolism; glycerophospholipid metabolism. In terms of biological role, catalyzes the reduction of the glycolytic intermediate dihydroxyacetone phosphate (DHAP) to sn-glycerol 3-phosphate (G3P), the key precursor for phospholipid synthesis. The sequence is that of Glycerol-3-phosphate dehydrogenase [NAD(P)+] from Leifsonia xyli subsp. xyli (strain CTCB07).